Reading from the N-terminus, the 498-residue chain is MTPVVALVGRPNVGKSTLFNRLTRSRDALVADFPGLTRDRKYGQAVVDDMNFIVVDTGGIDGSEEGIEVKMAEQSLQAIDESDVVLFMVDARAGVTSADIGIANHLRRQKKKVFLVANKTDGLDGDVHCADFYSLALGEVYQIAASHGRGVTSLLEKALAPFFEELTGKSAEEEAADEDAAYWAAFEGTDVTEEDESDEELTGEDRYADLPIKFAIIGRPNVGKSTLTNRMLGEDRVIVYDLPGTTRDSIYIPLERDDQHYIVIDTAGVRKKKKIYETVEKFSVVKTLQAIEDANVVLLLIDAREGVSDQDLSLLGFTLHSGRSIVIAVNKWDGLDQDTKEKIKEDLERRLGFVDFARVHFISALHGSGVGNLFDSIQEAYRSATKRISTSMLTRIMNMAAEDHQPPLVRGRRVKLKYAHAGGYNPPRIIIHGNQVKDLPESYKRYLINYYRKSLKIMGTPIHIEFQEGDNPFEGRRNKLTQTQIRKRRRMMSFVKKG.

EngA-type G domains follow at residues 3-166 (PVVA…FEEL) and 212-385 (IKFA…RSAT). Residues 9–16 (GRPNVGKS), 56–60 (DTGGI), 118–121 (NKTD), 218–225 (GRPNVGKS), 265–269 (DTAGV), and 330–333 (NKWD) contribute to the GTP site. The KH-like domain occupies 386–470 (KRISTSMLTR…PIHIEFQEGD (85 aa)).

Belongs to the TRAFAC class TrmE-Era-EngA-EngB-Septin-like GTPase superfamily. EngA (Der) GTPase family. Associates with the 50S ribosomal subunit.

Functionally, GTPase that plays an essential role in the late steps of ribosome biogenesis. The chain is GTPase Der from Tolumonas auensis (strain DSM 9187 / NBRC 110442 / TA 4).